The sequence spans 377 residues: NADH dehydrogenase [ubiquinone] 1 alpha subcomplex subunit 9, mitochondrial (377 aa).

The N-terminal 35 residues, 1–35 (MAAAAQSRVVRVLSMSRSAITAIATSVCHGPPCRQ), are a transit peptide targeting the mitochondrion. Lysine 175 is modified (N6-succinyllysine). N6-acetyllysine is present on residues lysine 189 and lysine 370.

It belongs to the complex I NDUFA9 subunit family. Complex I is composed of 45 different subunits. This a component of the hydrophobic protein fraction. Interacts with BLOC1S1. Interacts with SLC2A4. Interacts with CLOCK. Interacts with RAB5IF. It depends on FAD as a cofactor. Acetylated on lysine residues. BLOC1S1 is required for acetylation.

The protein localises to the mitochondrion matrix. Functionally, accessory subunit of the mitochondrial membrane respiratory chain NADH dehydrogenase (Complex I), that is believed not to be involved in catalysis. Complex I functions in the transfer of electrons from NADH to the respiratory chain. The immediate electron acceptor for the enzyme is believed to be ubiquinone. This Gorilla gorilla gorilla (Western lowland gorilla) protein is NADH dehydrogenase [ubiquinone] 1 alpha subcomplex subunit 9, mitochondrial (NDUFA9).